A 133-amino-acid chain; its full sequence is Holo-[acyl-carrier-protein] synthase (133 aa).

Mg(2+) is bound by residues aspartate 8 and glutamate 56.

The protein belongs to the P-Pant transferase superfamily. AcpS family. Mg(2+) is required as a cofactor.

It is found in the cytoplasm. It catalyses the reaction apo-[ACP] + CoA = holo-[ACP] + adenosine 3',5'-bisphosphate + H(+). Its function is as follows. Transfers the 4'-phosphopantetheine moiety from coenzyme A to a Ser of acyl-carrier-protein. This chain is Holo-[acyl-carrier-protein] synthase, found in Deinococcus radiodurans (strain ATCC 13939 / DSM 20539 / JCM 16871 / CCUG 27074 / LMG 4051 / NBRC 15346 / NCIMB 9279 / VKM B-1422 / R1).